The primary structure comprises 84 residues: UPF0410 protein YmgE (84 aa).

A run of 3 helical transmembrane segments spans residues methionine 1–methionine 21, glycine 27–alanine 47, and glycine 58–phenylalanine 78.

This sequence belongs to the UPF0410 family.

It is found in the cell inner membrane. This is UPF0410 protein YmgE (ymgE) from Escherichia coli O127:H6 (strain E2348/69 / EPEC).